The following is a 590-amino-acid chain: Ras-specific guanine nucleotide-releasing factor RalGPS2 (590 aa).

The region spanning 49 to 287 (TPEEYAGQIT…YKLSLKIEPG (239 aa)) is the Ras-GEF domain. The interval 288–319 (ASTPRSAASREDLAGPDIGASPQGGRKSSAAA) is disordered. Residues S293, S296, and S308 each carry the phosphoserine modification. A PXXP motif is present at residues 331-334 (PQTP). T333 is subject to Phosphothreonine. Phosphoserine is present on residues S336 and S350. At T368 the chain carries Phosphothreonine. The disordered stretch occupies residues 380 to 413 (DSVMEPHAPSRGQAESSTLSSGISIGSSDGSELS). S381 is subject to Phosphoserine. Residues 394-410 (ESSTLSSGISIGSSDGS) show a composition bias toward low complexity. Position 429 is a phosphoserine (S429). In terms of domain architecture, PH spans 464 to 576 (AVTIQGVLRR…WFKHLSAACQ (113 aa)). Positions 466-590 (TIQGVLRRKT…QVPTNLMTFE (125 aa)) are required for stimulation of nucleotide exchange by RALA.

Interacts with RALA. Interacts with the SH3 domains of GRB2 and PLCG1. In terms of tissue distribution, abundant in brain and testis.

It is found in the cytoplasm. It localises to the cell membrane. Functionally, guanine nucleotide exchange factor for the small GTPase RALA. May be involved in cytoskeletal organization. May also be involved in the stimulation of transcription in a Ras-independent fashion. In Mus musculus (Mouse), this protein is Ras-specific guanine nucleotide-releasing factor RalGPS2 (Ralgps2).